A 256-amino-acid polypeptide reads, in one-letter code: Type III pantothenate kinase (256 aa).

6–13 is an ATP binding site; sequence DIGNTHTV. Residues Tyr-100 and 107–110 each bind substrate; that span reads GADR. Asp-109 serves as the catalytic Proton acceptor. Residue Asp-129 participates in K(+) binding. ATP is bound at residue Thr-132. Thr-184 is a binding site for substrate.

The protein belongs to the type III pantothenate kinase family. As to quaternary structure, homodimer. It depends on NH4(+) as a cofactor. The cofactor is K(+).

The protein resides in the cytoplasm. The catalysed reaction is (R)-pantothenate + ATP = (R)-4'-phosphopantothenate + ADP + H(+). It participates in cofactor biosynthesis; coenzyme A biosynthesis; CoA from (R)-pantothenate: step 1/5. In terms of biological role, catalyzes the phosphorylation of pantothenate (Pan), the first step in CoA biosynthesis. The chain is Type III pantothenate kinase from Acidothermus cellulolyticus (strain ATCC 43068 / DSM 8971 / 11B).